A 30-amino-acid polypeptide reads, in one-letter code: Glutathione S-transferase (30 aa).

Belongs to the GST superfamily. As to quaternary structure, monomer and homodimer.

It localises to the cytoplasm. The catalysed reaction is RX + glutathione = an S-substituted glutathione + a halide anion + H(+). Functionally, conjugation of reduced glutathione to a wide number of exogenous and endogenous hydrophobic electrophiles. The chain is Glutathione S-transferase from Pseudomonas fluorescens.